Consider the following 387-residue polypeptide: MNLHEYQAKDLLESYGLKVQKGIVAHNPNEAAQAFDQLGGKFAVVKAQVHAGGRGKAGGVKVVKSSQEAREVAESLIGKNLVTFQTDAEGQPVNSVGVFEDVYPVTRELYLGAVVDRSSRKVTFMASTEGGVDIEEVAHNSPEKILKVEVDPLVGLQPFQAREVAFKLGLEGKQINDFVKTMLGAYKAFIECDFALFEINPLAVRENGEIVCVDGKINLDSNALYRHPKLLALRDKSQENAKELKASEHELNYVALKGNIGCMVNGAGLAMATMDIIQLYGGKPANFLDVGGGATKERVIEAFKLILDDENVKAVLINIFGGIVRCDMIAEAIIEAVKEVNVTVPVVVRLEGNNAEKGAKILADSGLKLIPADGLADAADKVVKSLG.

Positions 9–245 constitute an ATP-grasp domain; it reads KDLLESYGLK…KSQENAKELK (237 aa). ATP contacts are provided by residues lysine 46, 53-55, glutamate 100, tyrosine 103, and glutamate 108; that span reads GRG. Residues asparagine 200 and aspartate 214 each contribute to the Mg(2+) site. Substrate-binding positions include asparagine 265 and 322–324; that span reads GIV.

It belongs to the succinate/malate CoA ligase beta subunit family. In terms of assembly, heterotetramer of two alpha and two beta subunits. Mg(2+) is required as a cofactor.

It carries out the reaction succinate + ATP + CoA = succinyl-CoA + ADP + phosphate. It catalyses the reaction GTP + succinate + CoA = succinyl-CoA + GDP + phosphate. It participates in carbohydrate metabolism; tricarboxylic acid cycle; succinate from succinyl-CoA (ligase route): step 1/1. In terms of biological role, succinyl-CoA synthetase functions in the citric acid cycle (TCA), coupling the hydrolysis of succinyl-CoA to the synthesis of either ATP or GTP and thus represents the only step of substrate-level phosphorylation in the TCA. The beta subunit provides nucleotide specificity of the enzyme and binds the substrate succinate, while the binding sites for coenzyme A and phosphate are found in the alpha subunit. This Francisella tularensis subsp. tularensis (strain WY96-3418) protein is Succinate--CoA ligase [ADP-forming] subunit beta.